The following is a 424-amino-acid chain: Histidine--tRNA ligase (424 aa).

Belongs to the class-II aminoacyl-tRNA synthetase family. Homodimer.

It localises to the cytoplasm. It catalyses the reaction tRNA(His) + L-histidine + ATP = L-histidyl-tRNA(His) + AMP + diphosphate + H(+). The chain is Histidine--tRNA ligase from Salmonella arizonae (strain ATCC BAA-731 / CDC346-86 / RSK2980).